A 328-amino-acid chain; its full sequence is D-cysteine desulfhydrase (328 aa).

N6-(pyridoxal phosphate)lysine is present on lysine 51.

This sequence belongs to the ACC deaminase/D-cysteine desulfhydrase family. In terms of assembly, homodimer. Pyridoxal 5'-phosphate is required as a cofactor.

The enzyme catalyses D-cysteine + H2O = hydrogen sulfide + pyruvate + NH4(+) + H(+). In terms of biological role, catalyzes the alpha,beta-elimination reaction of D-cysteine and of several D-cysteine derivatives. It could be a defense mechanism against D-cysteine. This Escherichia coli (strain UTI89 / UPEC) protein is D-cysteine desulfhydrase.